The sequence spans 252 residues: MNPAIDLNCDMGESYGAWRMGNDEAVLQFVTSANIACGFHGGDPSTMRQTVAAALAHGVALGAHPSLPDLAGFGRRAMQITPQEAYDLVVYQVGALAGVAASQGARLHHVKAHGALYNMAAKDAALARAICQAVRDVDSDLVLYGLAGSALIDAARAIGLRAAQEVFADRTYQADGQLTPRSQPDAMITDLDQAIAQVLGMVRDGSVRTPDGQTVALQADTLCIHGDQPDALVFARGIRLALERNGIAIQAA.

This sequence belongs to the LamB/PxpA family. Forms a complex composed of PxpA, PxpB and PxpC.

It catalyses the reaction 5-oxo-L-proline + ATP + 2 H2O = L-glutamate + ADP + phosphate + H(+). Catalyzes the cleavage of 5-oxoproline to form L-glutamate coupled to the hydrolysis of ATP to ADP and inorganic phosphate. The polypeptide is 5-oxoprolinase subunit A 1 (Bordetella bronchiseptica (strain ATCC BAA-588 / NCTC 13252 / RB50) (Alcaligenes bronchisepticus)).